The following is a 610-amino-acid chain: Elongation factor 4 (610 aa).

Residues 12-194 (EKIRNFSIIA…QIVEKVPAPQ (183 aa)) enclose the tr-type G domain. Residues 24–29 (DHGKST) and 141–144 (NKID) each bind GTP.

This sequence belongs to the TRAFAC class translation factor GTPase superfamily. Classic translation factor GTPase family. LepA subfamily.

The protein localises to the cell membrane. It catalyses the reaction GTP + H2O = GDP + phosphate + H(+). Functionally, required for accurate and efficient protein synthesis under certain stress conditions. May act as a fidelity factor of the translation reaction, by catalyzing a one-codon backward translocation of tRNAs on improperly translocated ribosomes. Back-translocation proceeds from a post-translocation (POST) complex to a pre-translocation (PRE) complex, thus giving elongation factor G a second chance to translocate the tRNAs correctly. Binds to ribosomes in a GTP-dependent manner. This Streptococcus thermophilus (strain CNRZ 1066) protein is Elongation factor 4.